The chain runs to 133 residues: Small ribosomal subunit protein uS8 (133 aa).

This sequence belongs to the universal ribosomal protein uS8 family. In terms of assembly, part of the 30S ribosomal subunit.

In terms of biological role, one of the primary rRNA binding proteins, it binds directly to 16S rRNA central domain where it helps coordinate assembly of the platform of the 30S subunit. The polypeptide is Small ribosomal subunit protein uS8 (Sulfolobus acidocaldarius (strain ATCC 33909 / DSM 639 / JCM 8929 / NBRC 15157 / NCIMB 11770)).